Reading from the N-terminus, the 633-residue chain is MNSSDEEKQLQLITSLKEQAIGEYEDLRAENQKTKETCDKIRQERDEAVKKLEEFQKISHMVIEEVNFMQNHLEIEKTCRESAEALATKLNKENKTLKRISMLYMAKLGPDVITEEINIDDDDPGTDTDAAAETCVSVQCQKQIKELRDQIVSVQEEKKVLAIELESLKSKLGEVMEEVNKVKQEKAVLNSEVLEQRKVLEKCNRVSVLAVEEYEELQVNLELEKDLRKKAESFAQEMFIEQNKLKRQSHLLLQSSLPDQQLLKALDENAKLIQQLEEERIQHQQKVKELEERLENEALHKEIHNLRQQLELLEDDKRELEQKYQSSEEKARNLKHSVDELQKRVNQSENSVPPPPPPPPPLPPPPPNPIRSLMSMIRKRSHPSGGSTKKEKATQPETAEEVTDLKRQAVEEMMDRIKKGVHLRPVNQTARPKAKPDSLKGSESAVDELKGILGTLNKSTSSRSLKSLGPENSETELERILRRRKLTAEADSSSPTGILATSESKSMPVLGSVSSVTKSALNKKTLEAEFNNPCPLTPEPGEGPRKLEGCTNSKVTFQPPSKGGYRRKCVGSENQSEPVVVLDPVSTHEPQTKDQAAEKDPTQCKEEERGETQPEFKEDSSGGKTGETDSSNC.

Met-1 is subject to N-acetylmethionine. A phosphoserine mark is found at Ser-3 and Ser-4. Residues 7–353 (EKQLQLITSL…RVNQSENSVP (347 aa)) are a coiled coil. Residues Ser-101 and Ser-249 each carry the phosphoserine; by PAK1 modification. The segment at 343–508 (KRVNQSENSV…LATSESKSMP (166 aa)) is disordered. Residues 352–369 (VPPPPPPPPPLPPPPPNP) show a composition bias toward pro residues. Ser-375 carries the post-translational modification Phosphoserine. Residues 403-418 (TDLKRQAVEEMMDRIK) are compositionally biased toward basic and acidic residues. Residues 456–465 (LNKSTSSRSL) show a composition bias toward polar residues. A Phosphoserine modification is found at Ser-473. Phosphothreonine is present on Thr-487. Over residues 490 to 505 (ADSSSPTGILATSESK) the composition is skewed to polar residues. Ser-494 carries the post-translational modification Phosphoserine. Thr-496 carries the phosphothreonine modification. Phosphoserine occurs at positions 506 and 515. The segment at 525–633 (TLEAEFNNPC…KTGETDSSNC (109 aa)) is disordered. Thr-537 carries the phosphothreonine modification. A compositionally biased stretch (polar residues) spans 550-559 (CTNSKVTFQP). The segment covering 590 to 621 (PQTKDQAAEKDPTQCKEEERGETQPEFKEDSS) has biased composition (basic and acidic residues).

It belongs to the shootin family. Interacts with PFN2. Interacts (via N-terminus) with KIF20B; this interaction is direct and promotes the association of SHTN1 to microtubules in primary neurons. Associates with microtubule. Interacts with L1CAM; this interaction occurs in axonal growth cones. Interacts with actin filament retrograde flow; this interaction is enhanced in a netrin-1- and PAK1-dependent manner and promotes F-actin-substrate coupling and concomitant formation of traction forces at axonal growth cones. Interacts with RUFY3. Post-translationally, phosphorylated on Ser-101 and Ser-249 by PAK1 through a CDC42- and RAC1-dependent signaling pathway, which enhances its association with F-actin retrograde flow in filopodia and lamellipodia of axonal growth cones. Phosphorylation on Ser-101 and Ser-249 is increased by netrin-1. As to expression, brain-specific (at protein level). Expressed in hippocampal neurons.

It is found in the perikaryon. Its subcellular location is the cell projection. The protein localises to the axon. It localises to the growth cone. The protein resides in the cytoplasm. It is found in the cytoskeleton. Its subcellular location is the filopodium. The protein localises to the lamellipodium. Functionally, involved in the generation of internal asymmetric signals required for neuronal polarization and neurite outgrowth. Mediates netrin-1-induced F-actin-substrate coupling or 'clutch engagement' within the axon growth cone through activation of CDC42, RAC1 and PAK1-dependent signaling pathway, thereby converting the F-actin retrograde flow into traction forces, concomitantly with filopodium extension and axon outgrowth. Plays a role in cytoskeletal organization by regulating the subcellular localization of phosphoinositide 3-kinase (PI3K) activity at the axonal growth cone. Also plays a role in regenerative neurite outgrowth. In the developing cortex, cooperates with KIF20B to promote both the transition from the multipolar to the bipolar stage and the radial migration of cortical neurons from the ventricular zone toward the superficial layer of the neocortex. Involved in the accumulation of phosphatidylinositol 3,4,5-trisphosphate (PIP3) in the growth cone of primary hippocampal neurons. In Rattus norvegicus (Rat), this protein is Shootin-1.